The primary structure comprises 213 residues: Ribonuclease HII (213 aa).

Residues 1–213 (MKIIGIDEAG…SWKTAQKFIQ (213 aa)) form the RNase H type-2 domain. A divalent metal cation contacts are provided by aspartate 7, glutamate 8, and aspartate 105.

This sequence belongs to the RNase HII family. Requires Mn(2+) as cofactor. Mg(2+) is required as a cofactor.

It localises to the cytoplasm. The enzyme catalyses Endonucleolytic cleavage to 5'-phosphomonoester.. Endonuclease that specifically degrades the RNA of RNA-DNA hybrids. This is Ribonuclease HII from Methanococcoides burtonii (strain DSM 6242 / NBRC 107633 / OCM 468 / ACE-M).